The following is a 1228-amino-acid chain: Multimerin-1 (1228 aa).

A signal peptide spans 1–19 (MKGARLFVLLSSLWSGGIG). Residue asparagine 21 is glycosylated (N-linked (GlcNAc...) asparagine). The disordered stretch occupies residues 68–98 (TPEARTSEDSLLKSTLPPSETSAPAEGVRNQ). Residues 79–89 (LKSTLPPSETS) show a composition bias toward polar residues. N-linked (GlcNAc...) asparagine glycosylation is found at asparagine 97, asparagine 114, and asparagine 120. Asparagine 136 carries N-linked (GlcNAc...) (complex) asparagine glycosylation. The disordered stretch occupies residues 157-200 (NTVGGTGGIGGVGGTGGVGNRAPRETYLSRGDSSSSQRTDYQKS). Residues 160–175 (GGTGGIGGVGGTGGVG) are compositionally biased toward gly residues. The Cell attachment site signature appears at 186-188 (RGD). The segment covering 187 to 200 (GDSSSSQRTDYQKS) has biased composition (polar residues). The region spanning 207–282 (GKNWCAYVHT…PGYSGPKCQL (76 aa)) is the EMI domain. 3 disulfides stabilise this stretch: cysteine 211–cysteine 272, cysteine 238–cysteine 245, and cysteine 271–cysteine 280. A glycan (O-linked (Fuc) threonine) is linked at threonine 216. Threonine 265 carries O-linked (Fuc) threonine glycosylation. 2 coiled-coil regions span residues 333 to 365 (MKLT…KVSE) and 400 to 430 (NDMQ…IQKV). An N-linked (GlcNAc...) asparagine glycan is attached at asparagine 344. 16 N-linked (GlcNAc...) asparagine glycosylation sites follow: asparagine 431, asparagine 507, asparagine 541, asparagine 576, asparagine 618, asparagine 680, asparagine 729, asparagine 783, asparagine 816, asparagine 828, asparagine 840, asparagine 921, asparagine 933, asparagine 942, asparagine 981, and asparagine 1020. The stretch at 503-523 (YESLNKTLSKLKEVHEQLLST) forms a coiled coil. Coiled-coil stretches lie at residues 580 to 650 (SLEM…EILQ) and 675 to 726 (RKKI…EMED). The stretch at 819-869 (NFQKMYQMFNETTSQVRKYQQNMSHLEEKLLLTTKISKNFETRLQDIESKV) forms a coiled coil. Positions 1041–1077 (EYSSCSRHPCQNGGTCINGRTSFTCACRHPFTGDNCT) constitute an EGF-like domain. 3 disulfides stabilise this stretch: cysteine 1045–cysteine 1056, cysteine 1050–cysteine 1065, and cysteine 1067–cysteine 1076. A glycan (O-linked (Fuc) threonine) is linked at threonine 1055. N-linked (GlcNAc...) asparagine glycosylation occurs at asparagine 1075. Residues 1096–1228 (RYAPMVAFFA…TFSGYLLYRT (133 aa)) enclose the C1q domain.

In terms of assembly, multimeric. Composed of varying sized, disulfide-linked multimers, the smallest of which is a homotrimer. Proteolysis of the promultimerin in the N-terminal region, leads to the mature p155 form that is stored in platelets. Interacts with factor V/Va. Post-translationally, the N-terminus is blocked. Extensively N-glycosylated. In terms of processing, O-fucosylated within the EMI domain (at Thr-216 and Thr-265) by FUT10/POFUT3 and FUT11/POFUT4. O-fucosylation at Thr-216 and Thr-1055 are required for facilitating protein folding and secretion. As to expression, synthesized by endothelial cells and megakaryocytes. Stored in platelet alpha granules and endothelial cell Weibel-Palade bodies, following activation of these cells, it is released and attached to megakaryocytes, platelets, endothelium and subendothelium of blood vessels. Not found in plasma. Found in vascular tissues such as placenta, lung, and liver.

The protein localises to the secreted. Functionally, carrier protein for platelet (but not plasma) factor V/Va. Plays a role in the storage and stabilization of factor V in platelets. Upon release following platelet activation, may limit platelet and plasma factor Va-dependent thrombin generation. Ligand for integrin alpha-IIb/beta-3 and integrin alpha-V/beta-3 on activated platelets, and may function as an extracellular matrix or adhesive protein. The chain is Multimerin-1 (MMRN1) from Homo sapiens (Human).